The following is a 952-amino-acid chain: Valine--tRNA ligase (952 aa).

The 'HIGH' region signature appears at 45-55; it reads PNVTGSLHMGH. The 'KMSKS' region motif lies at 571–575; that stretch reads KMSKS. Lys574 lines the ATP pocket. Residues 894–950 are a coiled coil; it reads KEIAKADADIARVDLKLADQNFIANAPGEIVEDEKEKREAAAARKAKFVEALERLKA.

Belongs to the class-I aminoacyl-tRNA synthetase family. ValS type 1 subfamily. As to quaternary structure, monomer.

The protein localises to the cytoplasm. The enzyme catalyses tRNA(Val) + L-valine + ATP = L-valyl-tRNA(Val) + AMP + diphosphate. Its function is as follows. Catalyzes the attachment of valine to tRNA(Val). As ValRS can inadvertently accommodate and process structurally similar amino acids such as threonine, to avoid such errors, it has a 'posttransfer' editing activity that hydrolyzes mischarged Thr-tRNA(Val) in a tRNA-dependent manner. The chain is Valine--tRNA ligase from Nitrobacter winogradskyi (strain ATCC 25391 / DSM 10237 / CIP 104748 / NCIMB 11846 / Nb-255).